We begin with the raw amino-acid sequence, 632 residues long: ATP-dependent RNA helicase mrh4, mitochondrial (632 aa).

A mitochondrion-targeting transit peptide spans 1–37 (MNRLGRMSLPLRSPACLICQTRTTTLIPSSWQTARSM). The segment at 49–111 (MALSPDVAKP…KEEAQKKESP (63 aa)) is disordered. A compositionally biased stretch (basic and acidic residues) spans 97-111 (RSGDSKEEAQKKESP). Positions 141-174 (TSFDQFPLLPVVRNSIVSQALPGLMEVTPTPIQR) match the Q motif motif. In terms of domain architecture, Helicase ATP-binding spans 194–406 (DDDEPHYDQF…RKRYPDIKRL (213 aa)). 207–214 (AETGSGKT) serves as a coordination point for ATP. Residues 353-356 (DEAD) carry the DEAD box motif. Residues 460-632 (FLEPKTKKIL…EGMFRGQALI (173 aa)) enclose the Helicase C-terminal domain.

It belongs to the DEAD box helicase family. MRH4 subfamily.

The protein localises to the mitochondrion. It catalyses the reaction ATP + H2O = ADP + phosphate + H(+). ATP-binding RNA helicase involved in mitochondrial RNA metabolism. Required for maintenance of mitochondrial DNA. This chain is ATP-dependent RNA helicase mrh4, mitochondrial (mrh4), found in Aspergillus clavatus (strain ATCC 1007 / CBS 513.65 / DSM 816 / NCTC 3887 / NRRL 1 / QM 1276 / 107).